We begin with the raw amino-acid sequence, 511 residues long: MTKRALVSVSNKTGLIPFVKGLAEAGVEILSTGGGTKRALEEAGIAVVNVSDVTGFPEILDGRVKTLHPNIHGGLLAMRTNDEHIKQIEELGIEPIDYVVVNLYPFAETIANPDASFADAIENIDIGGPSMLRSAAKNHADVTVVVDPADYDAVLASLDASKEEQLALRQKLAAKVFRHTAAYDAMIGSYLTDAVGEENPESLTVTYTHKQTLRYGENPHQKAAFYESRTSSPSSIAQAKQLHGKELSYNNINDANAALEIVKEFSEPAAVAVKHMNPCGVGTGATVGEAYTRAYEADPKSIFGGIVALNREVDRATAEKMAAIFLEVILAPSFSEEAKAILQQKKNIRLLEVAVTKGELEKKLASVHGGLLIQEEDHLGFDDGDIRIPTKREPTEEEWTALKLGWKVVKHVKSNAIVLTNGEMTVGIGAGQMNRVGAAAIAIEQAGERAQGAALASDAFFPYGDTVEAAAKAGITAIIQPGGSVRDNESIEKADEYGIAMVFTGVRHFKH.

Residues 1-146 (MTKRALVSVS…KNHADVTVVV (146 aa)) enclose the MGS-like domain.

It belongs to the PurH family.

The catalysed reaction is (6R)-10-formyltetrahydrofolate + 5-amino-1-(5-phospho-beta-D-ribosyl)imidazole-4-carboxamide = 5-formamido-1-(5-phospho-D-ribosyl)imidazole-4-carboxamide + (6S)-5,6,7,8-tetrahydrofolate. The enzyme catalyses IMP + H2O = 5-formamido-1-(5-phospho-D-ribosyl)imidazole-4-carboxamide. It functions in the pathway purine metabolism; IMP biosynthesis via de novo pathway; 5-formamido-1-(5-phospho-D-ribosyl)imidazole-4-carboxamide from 5-amino-1-(5-phospho-D-ribosyl)imidazole-4-carboxamide (10-formyl THF route): step 1/1. Its pathway is purine metabolism; IMP biosynthesis via de novo pathway; IMP from 5-formamido-1-(5-phospho-D-ribosyl)imidazole-4-carboxamide: step 1/1. In Shouchella clausii (strain KSM-K16) (Alkalihalobacillus clausii), this protein is Bifunctional purine biosynthesis protein PurH.